A 140-amino-acid polypeptide reads, in one-letter code: Ribosome maturation factor RimP (140 aa).

This sequence belongs to the RimP family.

The protein resides in the cytoplasm. Functionally, required for maturation of 30S ribosomal subunits. This is Ribosome maturation factor RimP from Campylobacter fetus subsp. fetus (strain 82-40).